Reading from the N-terminus, the 238-residue chain is Probable 2-phosphosulfolactate phosphatase (238 aa).

It belongs to the ComB family. Mg(2+) is required as a cofactor.

The catalysed reaction is (2R)-O-phospho-3-sulfolactate + H2O = (2R)-3-sulfolactate + phosphate. The chain is Probable 2-phosphosulfolactate phosphatase from Clostridium beijerinckii (strain ATCC 51743 / NCIMB 8052) (Clostridium acetobutylicum).